We begin with the raw amino-acid sequence, 592 residues long: Probable tubulin polyglutamylase TTLL2 (592 aa).

Disordered stretches follow at residues 1-23 (MRGR…TTTP) and 51-77 (GVSI…MAED). Residues 7–23 (CSSTQSQALGSLRTTTP) show a composition bias toward polar residues. The TTL domain maps to 84–427 (LKPLVFRVDE…NGLRNEGREA (344 aa)). ATP is bound by residues K212, 218 to 219 (RG), 240 to 243 (QKYI), and 253 to 255 (KCD). R218 is a binding site for a protein. R279 is a binding site for L-glutamate. Residue 298–299 (TN) coordinates ATP. The L-glutamate site is built by S301 and K321. Positions 373, 386, and 388 each coordinate Mg(2+). An L-glutamate-binding site is contributed by K404.

This sequence belongs to the tubulin--tyrosine ligase family. It depends on Mg(2+) as a cofactor. In terms of tissue distribution, testis.

Its function is as follows. Probable tubulin polyglutamylase that generates side chains of glutamate on the gamma-carboxyl group of specific glutamate residues within the C-terminal tail of target proteins. Similar to TTLL1, may acquire enzymatic activity only in complex with other proteins as it is most likely lacking domains important for autonomous activity. Probably involved in the side-chain initiation step of the polyglutamylation reaction rather than the elongation step. This is Probable tubulin polyglutamylase TTLL2 from Homo sapiens (Human).